The following is a 290-amino-acid chain: MDGEQRGRSDRPGGSPHLPFLSNPLMGDVVSDWSPLHDAAIHGCLLTLRNLISQGWPVNIITADHVSPLHEACLRGHLSCASVLLSHGAQVNGMTIDWRTPLFNACVSGSQDCVNLLLQHGATPHPETELASPIHEAAKRGYVKCIESLAAHGANIDYNISHLGTPLYVACKNQQVACAKKLLESGVSVNQGKGLDSPLHVVARMSSVELVHLLMDFGANAQAKNADGKRPVDLVPLESPLIQIFLQNEGPQSLRQLCRLRIRKCFGIRQHHKISELLLPEDLKRFLLHL.

At Met1 the chain carries N-acetylmethionine. Residues 1–11 (MDGEQRGRSDR) are compositionally biased toward basic and acidic residues. The segment at 1-20 (MDGEQRGRSDRPGGSPHLPF) is disordered. 6 ANK repeats span residues 31–60 (SDWS…PVNI), 64–93 (DHVS…QVNG), 97–126 (DWRT…TPHP), 129–158 (ELAS…NIDY), 162–191 (HLGT…SVNQ), and 194–223 (GLDS…NAQA). The region spanning 236–290 (PLESPLIQIFLQNEGPQSLRQLCRLRIRKCFGIRQHHKISELLLPEDLKRFLLHL) is the SOCS box domain.

Belongs to the ankyrin SOCS box (ASB) family. Substrate-recognition component of the ECS(ASB9) complex, composed of ASB9, CUL5, ELOB, ELOC and RNF7/RBX2.

It localises to the mitochondrion. Its pathway is protein modification; protein ubiquitination. In terms of biological role, substrate-recognition component of a cullin-5-RING E3 ubiquitin-protein ligase complex (ECS complex, also named CRL5 complex), which mediates the ubiquitination and subsequent proteasomal degradation of target proteins. The ECS(ASB9) complex catalyzes ubiquitination of creatine kinases CKB and CKMT1A. The chain is Ankyrin repeat and SOCS box protein 9 from Mus musculus (Mouse).